Consider the following 207-residue polypeptide: dTTP/UTP pyrophosphatase (207 aa).

The active-site Proton acceptor is Asp-80.

It belongs to the Maf family. YhdE subfamily. It depends on a divalent metal cation as a cofactor.

The protein localises to the cytoplasm. It carries out the reaction dTTP + H2O = dTMP + diphosphate + H(+). It catalyses the reaction UTP + H2O = UMP + diphosphate + H(+). In terms of biological role, nucleoside triphosphate pyrophosphatase that hydrolyzes dTTP and UTP. May have a dual role in cell division arrest and in preventing the incorporation of modified nucleotides into cellular nucleic acids. This is dTTP/UTP pyrophosphatase (maf1) from Agrobacterium fabrum (strain C58 / ATCC 33970) (Agrobacterium tumefaciens (strain C58)).